We begin with the raw amino-acid sequence, 142 residues long: Phosphoribosyl-AMP cyclohydrolase (142 aa).

Mg(2+) is bound at residue Asp-92. Cys-93 provides a ligand contact to Zn(2+). Positions 94 and 96 each coordinate Mg(2+). Zn(2+) contacts are provided by Cys-109 and Cys-116.

This sequence belongs to the PRA-CH family. In terms of assembly, homodimer. Mg(2+) is required as a cofactor. The cofactor is Zn(2+).

It is found in the cytoplasm. It carries out the reaction 1-(5-phospho-beta-D-ribosyl)-5'-AMP + H2O = 1-(5-phospho-beta-D-ribosyl)-5-[(5-phospho-beta-D-ribosylamino)methylideneamino]imidazole-4-carboxamide. Its pathway is amino-acid biosynthesis; L-histidine biosynthesis; L-histidine from 5-phospho-alpha-D-ribose 1-diphosphate: step 3/9. Catalyzes the hydrolysis of the adenine ring of phosphoribosyl-AMP. The polypeptide is Phosphoribosyl-AMP cyclohydrolase (Alcanivorax borkumensis (strain ATCC 700651 / DSM 11573 / NCIMB 13689 / SK2)).